The sequence spans 664 residues: Zinc finger protein 800 (664 aa).

The C2H2-type 1; degenerate zinc-finger motif lies at 69–91 (FECKLCRSLFRGLPNLITHKKFY). Lys132 participates in a covalent cross-link: Glycyl lysine isopeptide (Lys-Gly) (interchain with G-Cter in SUMO2). 2 stretches are compositionally biased toward polar residues: residues 154–179 (IEVTESSSTPEQTEVQIQETSTEQSK) and 207–224 (SDEQPQESQADLETSDNS). The tract at residues 154 to 224 (IEVTESSSTP…QADLETSDNS (71 aa)) is disordered. The C2H2-type 2 zinc-finger motif lies at 230–253 (LICCLCRKEFNSRRGVRRHIRKVH). Lys279 participates in a covalent cross-link: Glycyl lysine isopeptide (Lys-Gly) (interchain with G-Cter in SUMO2). The segment at 287-310 (RSCPVCCKSFATKANVRRHFDEVH) adopts a C2H2-type 3 zinc-finger fold. At Ser317 the chain carries Phosphoserine. Thr319 bears the Phosphothreonine mark. The tract at residues 328–349 (QPLFLDSISPKKSFKTRKQKSS) is disordered. A Phosphoserine modification is found at Ser336. Over residues 339 to 348 (KSFKTRKQKS) the composition is skewed to basic residues. The C2H2-type 4 zinc-finger motif lies at 357-382 (TACKCLLCKRKYSSQIMLKRHMQIVH). The tract at residues 388-476 (GTNSKREKGP…GGQQKTRKPK (89 aa)) is disordered. Lys392 is covalently cross-linked (Glycyl lysine isopeptide (Lys-Gly) (interchain with G-Cter in SUMO2)). Lys409 participates in a covalent cross-link: Glycyl lysine isopeptide (Lys-Gly) (interchain with G-Cter in SUMO1); alternate. A Glycyl lysine isopeptide (Lys-Gly) (interchain with G-Cter in SUMO2); alternate cross-link involves residue Lys409. Residues 416 to 436 (VESSPPSITHSPQNELKGTNH) show a composition bias toward polar residues. Phosphoserine occurs at positions 422, 426, 455, 457, 460, and 462. Residues 458-470 (PKSTSPSAAGGQQ) are compositionally biased toward polar residues. Residue Lys476 forms a Glycyl lysine isopeptide (Lys-Gly) (interchain with G-Cter in SUMO2) linkage. C2H2-type zinc fingers lie at residues 486 to 508 (LYCKLCKRQFTSKQNLTKHIELH) and 519 to 542 (YKCPLCTYETRRKRDVIRHITVVH). Disordered stretches follow at residues 574–599 (KRGPSRDEAKHSDSKHDGTSNSPSKK) and 635–664 (HHKKTHKANASNSPEGNKTKGRSTRSKALV). Positions 577 to 591 (PSRDEAKHSDSKHDG) are enriched in basic and acidic residues. Residue Lys599 forms a Glycyl lysine isopeptide (Lys-Gly) (interchain with G-Cter in SUMO2) linkage. The segment at 618 to 640 (HRCNKCGKAFAKKTYLEHHKKTH) adopts a C2H2-type 7 zinc-finger fold. The segment covering 653 to 664 (TKGRSTRSKALV) has biased composition (basic residues).

It belongs to the krueppel C2H2-type zinc-finger protein family.

It is found in the nucleus. May be involved in transcriptional regulation. The polypeptide is Zinc finger protein 800 (ZNF800) (Homo sapiens (Human)).